The chain runs to 130 residues: Small ribosomal subunit protein uS8 (130 aa).

This sequence belongs to the universal ribosomal protein uS8 family. In terms of assembly, part of the 30S ribosomal subunit.

One of the primary rRNA binding proteins, it binds directly to 16S rRNA central domain where it helps coordinate assembly of the platform of the 30S subunit. The sequence is that of Small ribosomal subunit protein uS8 from Methanococcus maripaludis (strain C7 / ATCC BAA-1331).